Consider the following 565-residue polypeptide: Sulfite reductase [NADPH] hemoprotein beta-component (565 aa).

4 residues coordinate [4Fe-4S] cluster: Cys429, Cys435, Cys474, and Cys478. Residue Cys478 participates in siroheme binding.

Belongs to the nitrite and sulfite reductase 4Fe-4S domain family. Alpha(8)-beta(8). The alpha component is a flavoprotein, the beta component is a hemoprotein. Requires siroheme as cofactor. The cofactor is [4Fe-4S] cluster.

It catalyses the reaction hydrogen sulfide + 3 NADP(+) + 3 H2O = sulfite + 3 NADPH + 4 H(+). It participates in sulfur metabolism; hydrogen sulfide biosynthesis; hydrogen sulfide from sulfite (NADPH route): step 1/1. In terms of biological role, component of the sulfite reductase complex that catalyzes the 6-electron reduction of sulfite to sulfide. This is one of several activities required for the biosynthesis of L-cysteine from sulfate. This is Sulfite reductase [NADPH] hemoprotein beta-component from Shewanella sp. (strain W3-18-1).